Consider the following 659-residue polypeptide: DNA ligase (659 aa).

NAD(+)-binding positions include 32–36 (DAEYD), 81–82 (SL), and E110. Catalysis depends on K112, which acts as the N6-AMP-lysine intermediate. Residues R133, E168, K284, and K308 each coordinate NAD(+). Residues C402, C405, C420, and C425 each contribute to the Zn(2+) site. The region spanning 582 to 659 (AKPQIFAGKS…SEEEFAELLP (78 aa)) is the BRCT domain.

The protein belongs to the NAD-dependent DNA ligase family. LigA subfamily. It depends on Mg(2+) as a cofactor. The cofactor is Mn(2+).

It carries out the reaction NAD(+) + (deoxyribonucleotide)n-3'-hydroxyl + 5'-phospho-(deoxyribonucleotide)m = (deoxyribonucleotide)n+m + AMP + beta-nicotinamide D-nucleotide.. Functionally, DNA ligase that catalyzes the formation of phosphodiester linkages between 5'-phosphoryl and 3'-hydroxyl groups in double-stranded DNA using NAD as a coenzyme and as the energy source for the reaction. It is essential for DNA replication and repair of damaged DNA. The protein is DNA ligase of Desulfitobacterium hafniense (strain Y51).